We begin with the raw amino-acid sequence, 1015 residues long: Cytosolic carboxypeptidase 1 (1015 aa).

The interval Leu384–Asn462 is disordered. Positions Glu416–Ile451 are enriched in acidic residues. In terms of domain architecture, Peptidase M14 spans Tyr727–Thr1013. Zn(2+) is bound by residues His792, Glu795, and His891. Glu977 serves as the catalytic Proton donor/acceptor.

Belongs to the peptidase M14 family. It depends on Zn(2+) as a cofactor. In hermaphrodites and males, expressed in amphid and IL2 ciliated sensory neurons. In males, expressed in CEM head neurons, RnB and HOB tail neurons, and in gubernacular erector and retractor muscles.

It is found in the perikaryon. The protein localises to the cell projection. The protein resides in the cilium. Its subcellular location is the dendrite. Functionally, catalyzes the deglutamylation of polyglutamate side chains generated by post-translational polyglutamylation of proteins such as tubulins. Via the deglutamylation of tubulin, regulates the localization and velocity of kinesin motors and the structural integrity of microtubules in sensory cilia. In male CEM sensory neurons, regulates the cilia release of bioactive extracellular vesicles. Also regulates microtubule dynamics in uterine muscle cells. The protein is Cytosolic carboxypeptidase 1 of Caenorhabditis elegans.